Consider the following 350-residue polypeptide: HTH-type DNA-binding transcriptional activator EutR (350 aa).

In terms of domain architecture, HTH araC/xylS-type spans 243-344 (SRAREYVLEN…AEKPSLTLHQ (102 aa)). DNA-binding regions (H-T-H motif) lie at residues 260-281 (LDLC…HAIL) and 311-334 (VKDA…QQLF).

It functions in the pathway amine and polyamine degradation; ethanolamine degradation. In terms of biological role, activates the transcription of the eut operon, allowing utilization of ethanolamine (EA). Positively regulates its own transcription. Probably binds EA and vitamin B12 as effectors. Competes with ethanolamine ammonia-lysase (EAL, the first enzyme in the EA degradation pathway) for adenosylcobalamin. Ethanolamine-associated signaling mediated via this protein, but not EA degradation, impacts S.typhimurium survival within macrophages. Binds the promoter of ssrB and eutS in vitro; in mouse infection models binding to ssrB probably induces all 4 operons of pathogenicity island SPI-2. Its function is as follows. Expression of the eut operon allows this bacteria to use ethanolamine (EA) as a carbon, nitrogen and energy source. It relies on cobalamin (vitamin B12) both as a cofactor for the ethanolamine ammonia-lyase (EAL) activity and to induce the operon. EA enhances bacterial survival in macrophages in a concentration-dependent manner, suggesting it is an important nutrient in infection. This Salmonella typhimurium (strain LT2 / SGSC1412 / ATCC 700720) protein is HTH-type DNA-binding transcriptional activator EutR.